Consider the following 365-residue polypeptide: MVPSLITPPPSRSGEATPQKDACLNPVNIAEPEGHWIKLPEALFSSIMAVEPEVNPLYRTSKALSDEWLKTALRMNDKTAVIWSRLDIAYMSAICAPHADLETLKLMNDWNGWVFAFDDPFDEGTFANDPIKAAEEVIYTLATLDNIHPVVSPDENPLRHTLQSCWMRFRERSSPSLQYRWKKHLTMYCVGVLQQVGVQHRATRPTIEEYMDMRAGCVGAYPCIGLMEFAEGIDIPQNVMDHPSMQAISRITCDLVTLQNDLCSYRKDLIQGEESNIIFILKDQGMTDQQAVDQIGEMLYDCYRRWHMALANLPFWGEGIDRDVIKFVTGCRNIALGNLHWSLYTFRYLGNDGPEVKRTRMMKLP.

The span at Met1–Ser11 shows a compositional bias: pro residues. A disordered region spans residues Met1–Lys20. Positions 118, 260, and 264 each coordinate Mg(2+). A D(D/E)XX(D/E) motif motif is present at residues Asp118 to Asp122. Residues Asn260–Asp268 carry the NSE motif motif. The WxxxxxRY motif motif lies at Trp341–Tyr348. (2E,6E)-farnesyl diphosphate contacts are provided by Arg347 and Tyr348.

Belongs to the terpene synthase family. As to quaternary structure, homodimer. It depends on Mg(2+) as a cofactor.

The enzyme catalyses (2E,6E)-farnesyl diphosphate + H2O = koraiol + diphosphate. The protein operates within sesquiterpene biosynthesis. In terms of biological role, terpene cyclase that catalyzes the cyclization of farnesyl diphosphate (FPP) to the sesquiterpene koraiol. This is Terpene cyclase 4 from Gibberella fujikuroi (strain CBS 195.34 / IMI 58289 / NRRL A-6831) (Bakanae and foot rot disease fungus).